A 373-amino-acid polypeptide reads, in one-letter code: Transaldolase (373 aa).

Lys143 functions as the Schiff-base intermediate with substrate in the catalytic mechanism.

The protein belongs to the transaldolase family. Type 2 subfamily.

The protein localises to the cytoplasm. It catalyses the reaction D-sedoheptulose 7-phosphate + D-glyceraldehyde 3-phosphate = D-erythrose 4-phosphate + beta-D-fructose 6-phosphate. It participates in carbohydrate degradation; pentose phosphate pathway; D-glyceraldehyde 3-phosphate and beta-D-fructose 6-phosphate from D-ribose 5-phosphate and D-xylulose 5-phosphate (non-oxidative stage): step 2/3. In terms of biological role, transaldolase is important for the balance of metabolites in the pentose-phosphate pathway. In Mycobacterium ulcerans (strain Agy99), this protein is Transaldolase.